We begin with the raw amino-acid sequence, 506 residues long: Maturase K (506 aa).

This sequence belongs to the intron maturase 2 family. MatK subfamily.

It is found in the plastid. The protein localises to the chloroplast. In terms of biological role, usually encoded in the trnK tRNA gene intron. Probably assists in splicing its own and other chloroplast group II introns. This Trifolium beckwithii (Beckwith's clover) protein is Maturase K.